We begin with the raw amino-acid sequence, 216 residues long: NADH-quinone oxidoreductase subunit C (216 aa).

The protein belongs to the complex I 30 kDa subunit family. As to quaternary structure, NDH-1 is composed of 14 different subunits. Subunits NuoB, C, D, E, F, and G constitute the peripheral sector of the complex.

The protein resides in the cell inner membrane. It catalyses the reaction a quinone + NADH + 5 H(+)(in) = a quinol + NAD(+) + 4 H(+)(out). Its function is as follows. NDH-1 shuttles electrons from NADH, via FMN and iron-sulfur (Fe-S) centers, to quinones in the respiratory chain. The immediate electron acceptor for the enzyme in this species is believed to be ubiquinone. Couples the redox reaction to proton translocation (for every two electrons transferred, four hydrogen ions are translocated across the cytoplasmic membrane), and thus conserves the redox energy in a proton gradient. This is NADH-quinone oxidoreductase subunit C from Francisella tularensis subsp. tularensis (strain FSC 198).